The chain runs to 556 residues: 2-succinyl-5-enolpyruvyl-6-hydroxy-3-cyclohexene-1-carboxylate synthase (556 aa).

It belongs to the TPP enzyme family. MenD subfamily. Homodimer. It depends on Mg(2+) as a cofactor. Mn(2+) serves as cofactor. Requires thiamine diphosphate as cofactor.

It catalyses the reaction isochorismate + 2-oxoglutarate + H(+) = 5-enolpyruvoyl-6-hydroxy-2-succinyl-cyclohex-3-ene-1-carboxylate + CO2. Its pathway is quinol/quinone metabolism; 1,4-dihydroxy-2-naphthoate biosynthesis; 1,4-dihydroxy-2-naphthoate from chorismate: step 2/7. It participates in quinol/quinone metabolism; menaquinone biosynthesis. Its function is as follows. Catalyzes the thiamine diphosphate-dependent decarboxylation of 2-oxoglutarate and the subsequent addition of the resulting succinic semialdehyde-thiamine pyrophosphate anion to isochorismate to yield 2-succinyl-5-enolpyruvyl-6-hydroxy-3-cyclohexene-1-carboxylate (SEPHCHC). The sequence is that of 2-succinyl-5-enolpyruvyl-6-hydroxy-3-cyclohexene-1-carboxylate synthase from Escherichia coli (strain K12 / MC4100 / BW2952).